A 183-amino-acid chain; its full sequence is CKLF-like MARVEL transmembrane domain-containing protein 6 (183 aa).

Met-1 bears the N-acetylmethionine mark. The interval 1–20 (MENGAVYSPTTEEDPGPARG) is disordered. At 1–39 (MENGAVYSPTTEEDPGPARGPRSGLAAYCFLGRLPLLRR) the chain is on the cytoplasmic side. Ser-8 is modified (phosphoserine). The region spanning 33-160 (RLPLLRRVLK…DFVTMLYEKR (128 aa)) is the MARVEL domain. A helical membrane pass occupies residues 40–60 (VLKGLQLSLSLLAFICEEVVS). The Extracellular portion of the chain corresponds to 61–67 (QCTLCGG). A helical membrane pass occupies residues 68-88 (LYFFEFVSCSAFLLSLLILIV). Residues 89–106 (YCTPFYERVDTTKVKSSD) are Cytoplasmic-facing. The helical transmembrane segment at 107–127 (FYITLGTGCVFLLASIIFVST) threads the bilayer. The Extracellular portion of the chain corresponds to 128–134 (HDRTSAE). A helical transmembrane segment spans residues 135-155 (IAAIVFGFIASFMFLLDFVTM). Residues 156-183 (LYEKRQESQLRKSENTTRAEALTEPLNA) lie on the Cytoplasmic side of the membrane. Position 171 is a phosphothreonine (Thr-171).

Belongs to the chemokine-like factor family. In terms of assembly, interacts with PD-L1/CD274 (via transmembrane domain); the interaction is direct. Interacts with CMTM4. Interacts with CD58, ARG1, ENO1 and TMPO.

It localises to the cell membrane. The protein resides in the early endosome membrane. The protein localises to the recycling endosome membrane. Its function is as follows. Master regulator of recycling and plasma membrane expression of PD-L1/CD274, an immune inhibitory ligand critical for immune tolerance to self and antitumor immunity. Associates with both constitutive and IFNG-induced PD-L1/CD274 at recycling endosomes, where it protects PD-L1/CD274 from being targeted for lysosomal degradation, likely by preventing its ubiquitination. May stabilize PD-L1/CD274 expression on antigen presenting cells and potentiates inhibitory signaling by PDCD1/CD279, its receptor on T-cells, ultimately triggering T-cell anergy. This chain is CKLF-like MARVEL transmembrane domain-containing protein 6 (CMTM6), found in Pongo abelii (Sumatran orangutan).